The following is a 259-amino-acid chain: Probable transcriptional regulatory protein Noca_2383 (259 aa).

The protein belongs to the TACO1 family.

The protein resides in the cytoplasm. The chain is Probable transcriptional regulatory protein Noca_2383 from Nocardioides sp. (strain ATCC BAA-499 / JS614).